The chain runs to 78 residues: DNA-directed RNA polymerase subunit omega (78 aa).

Belongs to the RNA polymerase subunit omega family. In terms of assembly, the RNAP catalytic core consists of 2 alpha, 1 beta, 1 beta' and 1 omega subunit. When a sigma factor is associated with the core the holoenzyme is formed, which can initiate transcription.

It catalyses the reaction RNA(n) + a ribonucleoside 5'-triphosphate = RNA(n+1) + diphosphate. Functionally, promotes RNA polymerase assembly. Latches the N- and C-terminal regions of the beta' subunit thereby facilitating its interaction with the beta and alpha subunits. The polypeptide is DNA-directed RNA polymerase subunit omega (Desulfovibrio desulfuricans (strain ATCC 27774 / DSM 6949 / MB)).